The sequence spans 581 residues: Chaperonin GroEL 1 (581 aa).

ATP is bound by residues 29–32, 86–90, glycine 413, and aspartate 492; these read TIGP and DGTTT.

This sequence belongs to the chaperonin (HSP60) family. As to quaternary structure, forms a cylinder of 14 subunits composed of two heptameric rings stacked back-to-back. Interacts with the co-chaperonin GroES.

It localises to the cytoplasm. The enzyme catalyses ATP + H2O + a folded polypeptide = ADP + phosphate + an unfolded polypeptide.. Together with its co-chaperonin GroES, plays an essential role in assisting protein folding. The GroEL-GroES system forms a nano-cage that allows encapsulation of the non-native substrate proteins and provides a physical environment optimized to promote and accelerate protein folding. This chain is Chaperonin GroEL 1, found in Prochlorococcus marinus subsp. pastoris (strain CCMP1986 / NIES-2087 / MED4).